A 135-amino-acid chain; its full sequence is Large ribosomal subunit protein bL17 (135 aa).

Belongs to the bacterial ribosomal protein bL17 family. In terms of assembly, part of the 50S ribosomal subunit. Contacts protein L32.

This is Large ribosomal subunit protein bL17 from Rhodopseudomonas palustris (strain BisB18).